The following is a 469-amino-acid chain: Adenosylhomocysteinase (469 aa).

Substrate-binding residues include Thr63, Asp139, and Glu164. NAD(+) is bound at residue 165 to 167; the sequence is TTT. The substrate site is built by Lys194 and Asp198. Residues Asn199, 228–233, Glu251, Asn300, 321–323, and Asn375 contribute to the NAD(+) site; these read GYGDVG and IGH.

This sequence belongs to the adenosylhomocysteinase family. Requires NAD(+) as cofactor.

It localises to the cytoplasm. The catalysed reaction is S-adenosyl-L-homocysteine + H2O = L-homocysteine + adenosine. It participates in amino-acid biosynthesis; L-homocysteine biosynthesis; L-homocysteine from S-adenosyl-L-homocysteine: step 1/1. Functionally, may play a key role in the regulation of the intracellular concentration of adenosylhomocysteine. The sequence is that of Adenosylhomocysteinase from Pseudomonas putida (strain W619).